Consider the following 91-residue polypeptide: Large ribosomal subunit protein bL31 (91 aa).

The interval 62–91 is disordered; that stretch reads RRKYSGTKPQQTAKGKKAAPKSTPKTNKKG.

Belongs to the bacterial ribosomal protein bL31 family. Type A subfamily. Part of the 50S ribosomal subunit.

In terms of biological role, binds the 23S rRNA. This is Large ribosomal subunit protein bL31 from Thermosynechococcus vestitus (strain NIES-2133 / IAM M-273 / BP-1).